Consider the following 414-residue polypeptide: Arrestin domain-containing protein 3 (414 aa).

2 short sequence motifs (PPxY motif) span residues 346 to 349 (PPSY) and 391 to 394 (PPLY). The segment at 393 to 414 (LYSEIDPNPDQSADDRPSCPSR) is disordered. A compositionally biased stretch (basic and acidic residues) spans 405–414 (ADDRPSCPSR).

The protein belongs to the arrestin family. In terms of assembly, interacts (via PPxY motifs) with NEDD4 (via WW domains). Interacts with ADRB2. Interacts with ADRB3. Interacts with HGS (via PPxY motifs). Does not bind TXN (thioredoxin). Interacts with ITCH.

It localises to the cytoplasm. Its subcellular location is the cell membrane. It is found in the lysosome. The protein localises to the endosome. The protein resides in the early endosome. Functionally, adapter protein that plays a role in regulating cell-surface expression of adrenergic receptors and probably also other G protein-coupled receptors. Plays a role in NEDD4-mediated ubiquitination and endocytosis af activated ADRB2 and subsequent ADRB2 degradation. May recruit NEDD4 to ADRB2. Alternatively, may function as adapter protein that does not play a major role in recruiting NEDD4 to ADRB2, but rather plays a role in a targeting ADRB2 to endosomes. The protein is Arrestin domain-containing protein 3 (ARRDC3) of Pongo abelii (Sumatran orangutan).